The primary structure comprises 775 residues: 1,4-alpha-glucan branching enzyme GlgB (775 aa).

Aspartate 431 acts as the Nucleophile in catalysis. The active-site Proton donor is glutamate 484.

This sequence belongs to the glycosyl hydrolase 13 family. GlgB subfamily. As to quaternary structure, monomer.

It catalyses the reaction Transfers a segment of a (1-&gt;4)-alpha-D-glucan chain to a primary hydroxy group in a similar glucan chain.. It participates in glycan biosynthesis; glycogen biosynthesis. Its function is as follows. Catalyzes the formation of the alpha-1,6-glucosidic linkages in glycogen by scission of a 1,4-alpha-linked oligosaccharide from growing alpha-1,4-glucan chains and the subsequent attachment of the oligosaccharide to the alpha-1,6 position. The chain is 1,4-alpha-glucan branching enzyme GlgB from Parasynechococcus marenigrum (strain WH8102).